The following is a 134-amino-acid chain: Small ribosomal subunit protein uS12 (134 aa).

Residues methionine 1–lysine 30 are disordered. Aspartate 89 carries the 3-methylthioaspartic acid modification. The disordered stretch occupies residues glycine 106–lysine 134. Basic residues predominate over residues glutamine 112–lysine 123. Over residues alanine 124–lysine 134 the composition is skewed to low complexity.

Belongs to the universal ribosomal protein uS12 family. As to quaternary structure, part of the 30S ribosomal subunit. Contacts proteins S8 and S17. May interact with IF1 in the 30S initiation complex.

With S4 and S5 plays an important role in translational accuracy. In terms of biological role, interacts with and stabilizes bases of the 16S rRNA that are involved in tRNA selection in the A site and with the mRNA backbone. Located at the interface of the 30S and 50S subunits, it traverses the body of the 30S subunit contacting proteins on the other side and probably holding the rRNA structure together. The combined cluster of proteins S8, S12 and S17 appears to hold together the shoulder and platform of the 30S subunit. The polypeptide is Small ribosomal subunit protein uS12 (Fervidobacterium nodosum (strain ATCC 35602 / DSM 5306 / Rt17-B1)).